A 123-amino-acid chain; its full sequence is Large ribosomal subunit protein uL14 (123 aa).

It belongs to the universal ribosomal protein uL14 family. Part of the 50S ribosomal subunit. Forms a cluster with proteins L3 and L19. In the 70S ribosome, L14 and L19 interact and together make contacts with the 16S rRNA in bridges B5 and B8.

Binds to 23S rRNA. Forms part of two intersubunit bridges in the 70S ribosome. The polypeptide is Large ribosomal subunit protein uL14 (Escherichia coli O139:H28 (strain E24377A / ETEC)).